Here is a 1373-residue protein sequence, read N- to C-terminus: Disease resistance protein RRS1 (1373 aa).

Residues 5–146 (EKDEEFVCIS…EIVRDVYETH (142 aa)) form the TIR domain. The NB-ARC domain occupies 170 to 421 (IGIRCVGIWG…LLEGCGFFPH (252 aa)). 179-186 (GMPGIGKT) lines the ATP pocket. LRR repeat units lie at residues 498 to 522 (SEEIEGLFLDTSNLRFDLQPSAFKN), 535 to 553 (NPEVHPVINFPTGSLHSLP), 554 to 575 (NELRLLHWENYPLKSLPQNFDP), 577 to 598 (HLVEINMPYSQLQKLWGGTKNL), 621 to 646 (AENLEVIDLQGCTRLQNFPAAGRLLR), 665 to 688 (PPNIEKLHLQGTGILALPVSTVKP), 742 to 766 (LPNMANLDLNVLDLSGCSSLNSIQG), 768 to 793 (PRFLKQLYLGGTAIREVPQLPQSLEI), and 831 to 854 (PRNLKELYFAGTTLREVPQLPLSL). The Nuclear localization signal signature appears at 988 to 1005 (RNFHCWAPGKVVPKVRKD). The segment at residues 1204-1272 (IPAIDEGDLW…YLSEHNHPRP (69 aa)) is a DNA-binding region (WRKY). The tract at residues 1300–1323 (RVFQNKDEPNKPHLPSSSTPPGNA) is disordered.

In terms of assembly, interacts with PopP2, a R.solanacearum type III effector.

It localises to the nucleus. In terms of biological role, transcription factor. Interacts specifically with the W box (5'-(T)TGAC[CT]-3'), a frequently occurring elicitor-responsive cis-acting element. Also acts as a disease resistance protein involved in resistance to fungal and bacterial pathogens, including R.solanacearum, P.syringae pv. tomato and C.higginsianum. In presence of RPS4, elicites an EDS1-dependent hypersensitive response. The chain is Disease resistance protein RRS1 from Arabidopsis thaliana (Mouse-ear cress).